The sequence spans 339 residues: DNA-directed RNA polymerase subunit alpha (339 aa).

An alpha N-terminal domain (alpha-NTD) region spans residues Met1–Glu235. The segment at Phe251–Tyr339 is alpha C-terminal domain (alpha-CTD).

This sequence belongs to the RNA polymerase alpha chain family. In terms of assembly, homodimer. The RNAP catalytic core consists of 2 alpha, 1 beta, 1 beta' and 1 omega subunit. When a sigma factor is associated with the core the holoenzyme is formed, which can initiate transcription.

The enzyme catalyses RNA(n) + a ribonucleoside 5'-triphosphate = RNA(n+1) + diphosphate. Functionally, DNA-dependent RNA polymerase catalyzes the transcription of DNA into RNA using the four ribonucleoside triphosphates as substrates. The protein is DNA-directed RNA polymerase subunit alpha of Nitrobacter winogradskyi (strain ATCC 25391 / DSM 10237 / CIP 104748 / NCIMB 11846 / Nb-255).